Reading from the N-terminus, the 488-residue chain is B-type flagellin (488 aa).

It belongs to the bacterial flagellin family. Phosphorylated on tyrosine residue(s).

Its subcellular location is the secreted. The protein localises to the bacterial flagellum. In terms of biological role, flagellin is the subunit protein which polymerizes to form the filaments of bacterial flagella. In Pseudomonas aeruginosa (strain ATCC 15692 / DSM 22644 / CIP 104116 / JCM 14847 / LMG 12228 / 1C / PRS 101 / PAO1), this protein is B-type flagellin (fliC).